The primary structure comprises 336 residues: Lipoyl synthase (336 aa).

[4Fe-4S] cluster-binding residues include cysteine 81, cysteine 86, cysteine 92, cysteine 107, cysteine 111, cysteine 114, and serine 323. The region spanning 93–312 (FGHGTATFMI…EDYGYELGFS (220 aa)) is the Radical SAM core domain.

This sequence belongs to the radical SAM superfamily. Lipoyl synthase family. Requires [4Fe-4S] cluster as cofactor.

It localises to the cytoplasm. It carries out the reaction [[Fe-S] cluster scaffold protein carrying a second [4Fe-4S](2+) cluster] + N(6)-octanoyl-L-lysyl-[protein] + 2 oxidized [2Fe-2S]-[ferredoxin] + 2 S-adenosyl-L-methionine + 4 H(+) = [[Fe-S] cluster scaffold protein] + N(6)-[(R)-dihydrolipoyl]-L-lysyl-[protein] + 4 Fe(3+) + 2 hydrogen sulfide + 2 5'-deoxyadenosine + 2 L-methionine + 2 reduced [2Fe-2S]-[ferredoxin]. It functions in the pathway protein modification; protein lipoylation via endogenous pathway; protein N(6)-(lipoyl)lysine from octanoyl-[acyl-carrier-protein]: step 2/2. Its function is as follows. Catalyzes the radical-mediated insertion of two sulfur atoms into the C-6 and C-8 positions of the octanoyl moiety bound to the lipoyl domains of lipoate-dependent enzymes, thereby converting the octanoylated domains into lipoylated derivatives. This chain is Lipoyl synthase, found in Stenotrophomonas maltophilia (strain K279a).